The sequence spans 926 residues: UvrABC system protein A (926 aa).

G31–S38 lines the ATP pocket. A C4-type zinc finger spans residues C251–C278. ABC transporter domains are found at residues S308–L568 and P588–R916. G620 to S627 contacts ATP. The C4-type zinc finger occupies C719–C745.

The protein belongs to the ABC transporter superfamily. UvrA family. Forms a heterotetramer with UvrB during the search for lesions.

It localises to the cytoplasm. Functionally, the UvrABC repair system catalyzes the recognition and processing of DNA lesions. UvrA is an ATPase and a DNA-binding protein. A damage recognition complex composed of 2 UvrA and 2 UvrB subunits scans DNA for abnormalities. When the presence of a lesion has been verified by UvrB, the UvrA molecules dissociate. This Aquifex aeolicus (strain VF5) protein is UvrABC system protein A.